We begin with the raw amino-acid sequence, 411 residues long: GPI-anchor transamidase (411 aa).

Positions 1–22 (MRIAMHLPLLLLYIFLLPLSGA) are cleaved as a signal peptide. At 23–376 (NNTDAAHEVI…DIDSNECFFT (354 aa)) the chain is on the lumenal side. Active-site residues include histidine 157 and cysteine 199. 2 N-linked (GlcNAc...) asparagine glycosylation sites follow: asparagine 256 and asparagine 346. The helical transmembrane segment at 377 to 397 (SFKQSATIILALIVTILWFML) threads the bilayer. Over 398 to 411 (RGNTAKATYDLYTN) the chain is Cytoplasmic.

Belongs to the peptidase C13 family. In terms of assembly, forms a complex with CDC91, GPI16, GPI17 and GAA1. The disulfide bond between GPI8 and GPI16 is important for normal enzyme activity.

The protein localises to the endoplasmic reticulum membrane. The protein operates within glycolipid biosynthesis; glycosylphosphatidylinositol-anchor biosynthesis. Mediates GPI anchoring in the endoplasmic reticulum, by replacing a protein's C-terminal GPI attachment signal peptide with a pre-assembled GPI. During this transamidation reaction, the GPI transamidase forms a carbonyl intermediate with the substrate protein. The chain is GPI-anchor transamidase (GPI8) from Saccharomyces cerevisiae (strain ATCC 204508 / S288c) (Baker's yeast).